The primary structure comprises 434 residues: Trigger factor (434 aa).

One can recognise a PPIase FKBP-type domain in the interval 162 to 247 (GDKINISLIA…FNTVEQAKLP (86 aa)).

This sequence belongs to the FKBP-type PPIase family. Tig subfamily.

It is found in the cytoplasm. It carries out the reaction [protein]-peptidylproline (omega=180) = [protein]-peptidylproline (omega=0). Functionally, involved in protein export. Acts as a chaperone by maintaining the newly synthesized protein in an open conformation. Functions as a peptidyl-prolyl cis-trans isomerase. The chain is Trigger factor from Methylobacillus flagellatus (strain ATCC 51484 / DSM 6875 / VKM B-1610 / KT).